A 269-amino-acid polypeptide reads, in one-letter code: E3 ubiquitin-protein ligase complex slx8-rfp subunit slx8 (269 aa).

Residues 1 to 10 (MPPAHKRDTN) are compositionally biased toward basic and acidic residues. Disordered stretches follow at residues 1 to 75 (MPPA…LNRA) and 166 to 196 (PRKQ…QVVP). The segment covering 60–70 (PSGTTSENESL) has biased composition (polar residues). An RING-type zinc finger spans residues 206–247 (CVICLDSPENLSCTPCGHIFCNFCILSALGTTAATQKCPVCR).

Part of an E3 ubiquitin complex including rfp1, rfp2 and slx8. Interacts with rfp1 and rfp2.

Its subcellular location is the nucleus. It catalyses the reaction S-ubiquitinyl-[E2 ubiquitin-conjugating enzyme]-L-cysteine + [acceptor protein]-L-lysine = [E2 ubiquitin-conjugating enzyme]-L-cysteine + N(6)-ubiquitinyl-[acceptor protein]-L-lysine.. Its pathway is protein modification; protein ubiquitination. Functionally, mediates ubiquitination and subsequent desumoylation/degradation of sumoylated proteins and proteins containing SUMO-like domains. Acts as a critical suppressor of gross chromosomal rearrangements (GCRs) during normal cell cycle progression. Involved in stabilizing, restarting or resolving transiently stalled replication forks. Prevents accumulation of DNA damage during cell cycle progression. This Schizosaccharomyces pombe (strain 972 / ATCC 24843) (Fission yeast) protein is E3 ubiquitin-protein ligase complex slx8-rfp subunit slx8 (slx8).